The chain runs to 291 residues: Undecaprenyl-diphosphatase 2 (291 aa).

The next 6 membrane-spanning stretches (helical) occupy residues 39-59, 85-105, 118-138, 198-218, 231-251, and 262-282; these read PGAA…LIYF, ARMG…GLTL, ITAT…RMAA, AARY…VFEL, PTLF…AWFM, and FVWY…VGVL.

Belongs to the UppP family.

It is found in the cell membrane. It carries out the reaction di-trans,octa-cis-undecaprenyl diphosphate + H2O = di-trans,octa-cis-undecaprenyl phosphate + phosphate + H(+). Functionally, catalyzes the dephosphorylation of undecaprenyl diphosphate (UPP). Confers resistance to bacitracin. The protein is Undecaprenyl-diphosphatase 2 of Streptomyces coelicolor (strain ATCC BAA-471 / A3(2) / M145).